The sequence spans 467 residues: Sugar transporter ERD6-like 11 (467 aa).

Helical transmembrane passes span 26-46 (ITAC…SYGC), 75-95 (FLNV…VILG), 105-125 (FFCV…WLDL), 128-148 (ISLG…IAEI), 155-177 (GAFT…FFGT), 183-203 (VMAV…FFIP), 266-286 (LVVG…GITY), 301-321 (LGSM…LILV), 328-348 (PLLL…GVSF), 359-379 (LIPI…AFGI), 402-422 (IVAL…NFMF), and 428-448 (GTFY…WMLV).

Belongs to the major facilitator superfamily. Sugar transporter (TC 2.A.1.1) family.

It is found in the membrane. Its function is as follows. Sugar transporter. The chain is Sugar transporter ERD6-like 11 from Arabidopsis thaliana (Mouse-ear cress).